Consider the following 951-residue polypeptide: Coiled-coil and C2 domain-containing protein 1A (951 aa).

Disordered stretches follow at residues 80-139 (CMRD…LETT), 185-266 (AIDE…RQRD), 306-346 (VDLS…PPPR), and 437-491 (NQDE…TRAQ). Residues 84–104 (PDEDEEEGTDEDDLEADDDLL) are compositionally biased toward acidic residues. Residues T92, T204, and T206 each carry the phosphothreonine modification. A compositionally biased stretch (low complexity) spans 201–210 (PASTPTYSPA). Phosphoserine; by CDK1 is present on S208. S253 and S324 each carry phosphoserine. The segment covering 311-333 (LPPPPDQLPPDPPSPPSQPPTPA) has biased composition (pro residues). Positions 346–392 (RTLLEALEQRMERYQVAAAQAKSKGDQRKARMHERIVKQYQDAIRAH) form a coiled coil. S455 is subject to Phosphoserine. The segment covering 475-488 (SAPTAKAPPKATST) has biased composition (low complexity). Positions 484-517 (KATSTRAQQQLAFLEGRKKQLLQAALRAKQKNDV) form a coiled coil. Residues 637–771 (RFEQRTFSVI…EIACEVREIL (135 aa)) form the C2 domain. A disordered region spans residues 818–841 (TQVAGPKGKAPPVPAPARESGNRS).

Belongs to the CC2D1 family. In terms of processing, phosphorylation on Ser-208 by CDK1 promotes spindle pole localization and association with SCC1/RAD21.

It localises to the cytoplasm. It is found in the nucleus. The protein localises to the cytoskeleton. Its subcellular location is the microtubule organizing center. The protein resides in the centrosome. Transcription factor that binds specifically to the DRE (dual repressor element) and represses HTR1A gene transcription in neuronal cells. The combination of calcium and ATP specifically inactivates the binding with FRE. May play a role in the altered regulation of HTR1A associated with anxiety and major depression. Mediates HDAC-independent repression of HTR1A promoter in neuronal cell. Performs essential function in controlling functional maturation of synapses. Plays distinct roles depending on its localization. When cytoplasmic, acts as a scaffold protein in the PI3K/PDK1/AKT pathway. Repressor of HTR1A when nuclear. In the centrosome, regulates spindle pole localization of the cohesin subunit SCC1/RAD21, thereby mediating centriole cohesion during mitosis. The chain is Coiled-coil and C2 domain-containing protein 1A (CC2D1A) from Homo sapiens (Human).